The sequence spans 547 residues: MAAKDILFDSDARAKLKVGVDKLANAVKVTLGPAGRNVLIDKKFGAPTSTKDGVTVAKEIELEDAFENMGAQMVREVASKTSDVAGDGTTTATVLAQAIYREGLKNVAAGARPIDLKRGIDRAVKEVVAELRSISRNISGKKEIAQVGTISANNDPEIGELIAEAMDKVGKDGVITVEEAKGMDTELKVVEGMQFDRGYLSPYFVTNPETMEAELEEALILIYDKKISNMKELLPILEKSAQSGRPLLIIAEDIEGEALATIVVNKLRGTLKVAAVKAPGFGDRRKAMLEDIAILTGGTVISEEKGYKLENATMAYLGQASRVNIDKDNTTIVEGKGKQEEITARINEIKGQIEKSTSDYDTEKLQERLAKLSGGVAVLNIGASTEVEMKEKKARVEDALHATRAAVQEGIVAGGGVALIRAIKGLERATADNDDQKTGIDIIRRALEEPLRQIVANTGTTDGAVVLEKVRSGEGDYGFNARTEEYENLVDAGVVDPTKVTRSALENAASVASILLTTEAAITDLPEDKADMPAMPPGGMGGMGGMY.

Residues 30-33, K51, 87-91, G415, and D496 contribute to the ATP site; these read TLGP and DGTTT.

The protein belongs to the chaperonin (HSP60) family. As to quaternary structure, forms a cylinder of 14 subunits composed of two heptameric rings stacked back-to-back. Interacts with the co-chaperonin GroES.

The protein resides in the cytoplasm. The enzyme catalyses ATP + H2O + a folded polypeptide = ADP + phosphate + an unfolded polypeptide.. In terms of biological role, together with its co-chaperonin GroES, plays an essential role in assisting protein folding. The GroEL-GroES system forms a nano-cage that allows encapsulation of the non-native substrate proteins and provides a physical environment optimized to promote and accelerate protein folding. In Chlorobaculum parvum (strain DSM 263 / NCIMB 8327) (Chlorobium vibrioforme subsp. thiosulfatophilum), this protein is Chaperonin GroEL.